The following is a 441-amino-acid chain: FBD-associated F-box protein At5g18780 (441 aa).

One can recognise an F-box domain in the interval 10–56 (EDRISILPEPLLCHILSFLRTKDSVRTSVLSSRWRDLWLWVPRLDLD). The region spanning 366–410 (LPRCLISSLASVDIESPITDKATELKLVSYLLENSTTLKKLVLRL) is the FBD domain.

The polypeptide is FBD-associated F-box protein At5g18780 (Arabidopsis thaliana (Mouse-ear cress)).